We begin with the raw amino-acid sequence, 152 residues long: Large ribosomal subunit protein eL14 (152 aa).

Belongs to the eukaryotic ribosomal protein eL14 family.

The chain is Large ribosomal subunit protein eL14 (RPL14) from Lumbricus rubellus (Humus earthworm).